A 142-amino-acid polypeptide reads, in one-letter code: Putative pre-16S rRNA nuclease (142 aa).

It belongs to the YqgF nuclease family.

The protein resides in the cytoplasm. Functionally, could be a nuclease involved in processing of the 5'-end of pre-16S rRNA. The polypeptide is Putative pre-16S rRNA nuclease (Ruminiclostridium cellulolyticum (strain ATCC 35319 / DSM 5812 / JCM 6584 / H10) (Clostridium cellulolyticum)).